A 398-amino-acid chain; its full sequence is Peptidyl-prolyl cis-trans isomerase D (398 aa).

The 165-residue stretch at 21–185 folds into the PPIase cyclophilin-type domain; the sequence is FGSSPASRPG…EDVKIVDCGE (165 aa). TPR repeat units lie at residues 229–262, 282–323, and 335–368; these read GLAL…LQLH, TSIQ…PSTE, and AKAF…APED.

The protein belongs to the cyclophilin-type PPIase family. PPIase D subfamily.

It is found in the cytoplasm. The enzyme catalyses [protein]-peptidylproline (omega=180) = [protein]-peptidylproline (omega=0). Functionally, PPIases accelerate the folding of proteins. It catalyzes the cis-trans isomerization of proline imidic peptide bonds in oligopeptides. The chain is Peptidyl-prolyl cis-trans isomerase D (CPR6) from Mycosarcoma maydis (Corn smut fungus).